A 521-amino-acid polypeptide reads, in one-letter code: Cytochrome P450 1A1 (521 aa).

Position 229 (F229) interacts with substrate. C463 serves as a coordination point for heme.

The protein belongs to the cytochrome P450 family. Heme serves as cofactor.

It localises to the endoplasmic reticulum membrane. Its subcellular location is the microsome membrane. The enzyme catalyses an organic molecule + reduced [NADPH--hemoprotein reductase] + O2 = an alcohol + oxidized [NADPH--hemoprotein reductase] + H2O + H(+). Its function is as follows. Cytochromes P450 are a group of heme-thiolate monooxygenases. They oxidize a variety of structurally unrelated compounds, including steroids, fatty acids, and xenobiotics. The protein is Cytochrome P450 1A1 (cyp1a1) of Chelon saliens (Leaping mullet).